The sequence spans 133 residues: Small ribosomal subunit protein uS11 (133 aa).

The protein belongs to the universal ribosomal protein uS11 family. In terms of assembly, part of the 30S ribosomal subunit. Interacts with proteins S7 and S18. Binds to IF-3.

Functionally, located on the platform of the 30S subunit, it bridges several disparate RNA helices of the 16S rRNA. Forms part of the Shine-Dalgarno cleft in the 70S ribosome. This Ralstonia nicotianae (strain ATCC BAA-1114 / GMI1000) (Ralstonia solanacearum) protein is Small ribosomal subunit protein uS11.